Consider the following 861-residue polypeptide: Protein argonaute-3 (861 aa).

Residue M1 is modified to N-acetylmethionine. Residues 230–349 (PVIQFMCEVL…LPLEVCNIVA (120 aa)) enclose the PAZ domain. Residues 518–820 (LIIVILPGKT…VAFRARYHLV (303 aa)) form the Piwi domain. The interval 530 to 567 (YAEVKRVGDTLLGMATQCVQVKNVIKTSPQTLSNLCLK) is interaction with guide RNA. D598, E638, and D670 together coordinate a divalent metal cation. The interval 758–806 (QGTSRPSHYHVLWDDNCFTADELQLLTYQPSAHTYVHCTRSVSIPAPAY) is interaction with guide RNA. H809 provides a ligand contact to a divalent metal cation. The interval 824 to 847 (RDSAEGSHVSGQSNGRDPQALAKA) is disordered. S826 is subject to Phosphoserine.

It belongs to the argonaute family. Ago subfamily. As to quaternary structure, interacts with EIF4B, IMP8, PRMT5 and TNRC6B. Interacts with APOBEC3F, APOBEC3G and APOBEC3H. Interacts with EDC4. Post-translationally, ubiquitinated on surface-exposed lysines by a SCF-like E3 ubiquitin-protein ligase complex containing ZSWIM8 during target-directed microRNA degradation (TDMD), a process that mediates degradation of microRNAs (miRNAs). Ubiquitination by the SCF-like E3 ubiquitin-protein ligase complex containing ZSWIM8 leads to its subsequent degradation, thereby exposing miRNAs for degradation. ZSWIM8 recognizes and binds AGO3 when it is engaged with a TDMD target.

It is found in the cytoplasm. It localises to the P-body. It carries out the reaction Endonucleolytic cleavage to 5'-phosphomonoester.. Required for RNA-mediated gene silencing (RNAi). Binds to short RNAs such as microRNAs (miRNAs) and represses the translation of mRNAs which are complementary to them. Proposed to be involved in stabilization of small RNA derivates (siRNA) derived from processed RNA polymerase III-transcribed Alu repeats containing a DR2 retinoic acid response element (RARE) in stem cells and in the subsequent siRNA-dependent degradation of a subset of RNA polymerase II-transcribed coding mRNAs by recruiting a mRNA decapping complex involving EDC4. Possesses RNA slicer activity but only on select RNAs bearing 5'- and 3'-flanking sequences to the region of guide-target complementarity. This Bos taurus (Bovine) protein is Protein argonaute-3 (AGO3).